The following is a 563-amino-acid chain: Urocanate hydratase (563 aa).

NAD(+) is bound by residues 53–54 (GG), Q131, 177–179 (GMG), E197, R202, 243–244 (NA), 264–268 (QTSAH), 274–275 (YL), and Y323. C411 is a catalytic residue. G493 serves as a coordination point for NAD(+).

This sequence belongs to the urocanase family. NAD(+) is required as a cofactor.

The protein localises to the cytoplasm. It catalyses the reaction 4-imidazolone-5-propanoate = trans-urocanate + H2O. Its pathway is amino-acid degradation; L-histidine degradation into L-glutamate; N-formimidoyl-L-glutamate from L-histidine: step 2/3. In terms of biological role, catalyzes the conversion of urocanate to 4-imidazolone-5-propionate. This Yersinia pestis bv. Antiqua (strain Antiqua) protein is Urocanate hydratase.